We begin with the raw amino-acid sequence, 267 residues long: Small ribosomal subunit protein uS2 (267 aa).

Residues 226-267 (AAAPNSASVREEEFSAESADEGKGRRAPAKKGEKKADAPAAE) form a disordered region. Over residues 245–267 (DEGKGRRAPAKKGEKKADAPAAE) the composition is skewed to basic and acidic residues.

It belongs to the universal ribosomal protein uS2 family.

This is Small ribosomal subunit protein uS2 from Xanthomonas oryzae pv. oryzae (strain MAFF 311018).